The primary structure comprises 61 residues: Photosystem II reaction center protein K (61 aa).

Positions 1–24 (MLNIFCLICICLNSTLYSSSFFFA) are excised as a propeptide. A helical transmembrane segment spans residues 32 to 52 (FFNPIIDVMPIIPVLFFLLAF).

It belongs to the PsbK family. PSII is composed of 1 copy each of membrane proteins PsbA, PsbB, PsbC, PsbD, PsbE, PsbF, PsbH, PsbI, PsbJ, PsbK, PsbL, PsbM, PsbT, PsbX, PsbY, PsbZ, Psb30/Ycf12, at least 3 peripheral proteins of the oxygen-evolving complex and a large number of cofactors. It forms dimeric complexes.

It is found in the plastid. It localises to the chloroplast thylakoid membrane. Its function is as follows. One of the components of the core complex of photosystem II (PSII). PSII is a light-driven water:plastoquinone oxidoreductase that uses light energy to abstract electrons from H(2)O, generating O(2) and a proton gradient subsequently used for ATP formation. It consists of a core antenna complex that captures photons, and an electron transfer chain that converts photonic excitation into a charge separation. The chain is Photosystem II reaction center protein K from Phalaenopsis aphrodite subsp. formosana (Moth orchid).